The primary structure comprises 358 residues: Alanine racemase (358 aa).

The active-site Proton acceptor; specific for D-alanine is Lys-34. The residue at position 34 (Lys-34) is an N6-(pyridoxal phosphate)lysine. Arg-130 contributes to the substrate binding site. Tyr-254 (proton acceptor; specific for L-alanine) is an active-site residue. Met-302 is a binding site for substrate.

The protein belongs to the alanine racemase family. The cofactor is pyridoxal 5'-phosphate.

The catalysed reaction is L-alanine = D-alanine. It participates in amino-acid biosynthesis; D-alanine biosynthesis; D-alanine from L-alanine: step 1/1. Functionally, catalyzes the interconversion of L-alanine and D-alanine. May also act on other amino acids. The protein is Alanine racemase (alr) of Stutzerimonas stutzeri (strain A1501) (Pseudomonas stutzeri).